The primary structure comprises 389 residues: Lipid-A-disaccharide synthase (389 aa).

The protein belongs to the LpxB family.

It catalyses the reaction a lipid X + a UDP-2-N,3-O-bis[(3R)-3-hydroxyacyl]-alpha-D-glucosamine = a lipid A disaccharide + UDP + H(+). The protein operates within bacterial outer membrane biogenesis; LPS lipid A biosynthesis. Its function is as follows. Condensation of UDP-2,3-diacylglucosamine and 2,3-diacylglucosamine-1-phosphate to form lipid A disaccharide, a precursor of lipid A, a phosphorylated glycolipid that anchors the lipopolysaccharide to the outer membrane of the cell. In Histophilus somni (strain 2336) (Haemophilus somnus), this protein is Lipid-A-disaccharide synthase.